The chain runs to 226 residues: NifU-like protein 1, chloroplastic (226 aa).

The N-terminal 76 residues, 1-76 (MQTTTVPMAA…PVTAVQLPLT (76 aa)), are a transit peptide targeting the chloroplast.

Belongs to the NifU family. In terms of assembly, homodimer; disulfide-linked.

The protein resides in the plastid. The protein localises to the chloroplast stroma. Its function is as follows. Molecular scaffold for [Fe-S] cluster assembly of chloroplastic iron-sulfur proteins. The polypeptide is NifU-like protein 1, chloroplastic (NIFU1) (Oryza sativa subsp. japonica (Rice)).